A 160-amino-acid polypeptide reads, in one-letter code: S-ribosylhomocysteine lyase (160 aa).

The Fe cation site is built by His57, His61, and Cys127.

This sequence belongs to the LuxS family. Homodimer. The cofactor is Fe cation.

The enzyme catalyses S-(5-deoxy-D-ribos-5-yl)-L-homocysteine = (S)-4,5-dihydroxypentane-2,3-dione + L-homocysteine. Its function is as follows. Involved in the synthesis of autoinducer 2 (AI-2) which is secreted by bacteria and is used to communicate both the cell density and the metabolic potential of the environment. The regulation of gene expression in response to changes in cell density is called quorum sensing. Catalyzes the transformation of S-ribosylhomocysteine (RHC) to homocysteine (HC) and 4,5-dihydroxy-2,3-pentadione (DPD). This Streptococcus mutans serotype c (strain ATCC 700610 / UA159) protein is S-ribosylhomocysteine lyase.